Consider the following 311-residue polypeptide: Porphobilinogen deaminase (311 aa).

Cys242 is modified (S-(dipyrrolylmethanemethyl)cysteine).

Belongs to the HMBS family. In terms of assembly, monomer. Dipyrromethane is required as a cofactor.

It carries out the reaction 4 porphobilinogen + H2O = hydroxymethylbilane + 4 NH4(+). It participates in porphyrin-containing compound metabolism; protoporphyrin-IX biosynthesis; coproporphyrinogen-III from 5-aminolevulinate: step 2/4. Its function is as follows. Tetrapolymerization of the monopyrrole PBG into the hydroxymethylbilane pre-uroporphyrinogen in several discrete steps. The protein is Porphobilinogen deaminase (hemC) of Vibrio cholerae serotype O1 (strain ATCC 39315 / El Tor Inaba N16961).